The chain runs to 329 residues: MKLLRRAWRRRAALGLGTLALCGAALLYLARCAAEPGDPRAMSGRSPPPPAPARAAAFLAVLVASAPRAAERRSVIRSTWLARRGAPGDVWARFAVGTAGLGAEERRALEREQARHGDLLLLPALRDAYENLTAKVLAMLAWLDEHVAFEFVLKADDDSFARLDALLAELRAREPARRRRLYWGFFSGRGRVKPGGRWREAAWQLCDYYLPYALGGGYVLSADLVHYLRLSRDYLRAWHSEDVSLGAWLAPVDVQREHDPRFDTEYRSRGCSNQYLVTHKQSLEDMLEKHATLAREGRLCKREVQLRLSYVYDWSAPPSQCCQRREGIP.

The Cytoplasmic segment spans residues 1–11; that stretch reads MKLLRRAWRRR. The chain crosses the membrane as a helical; Signal-anchor for type II membrane protein span at residues 12 to 34; that stretch reads AALGLGTLALCGAALLYLARCAA. Over 35–329 the chain is Lumenal; it reads EPGDPRAMSG…QCCQRREGIP (295 aa). Residue asparagine 131 is glycosylated (N-linked (GlcNAc...) asparagine).

The protein belongs to the glycosyltransferase 31 family. Mn(2+) serves as cofactor. As to expression, ubiquitous.

It localises to the golgi apparatus. It is found in the golgi stack membrane. The catalysed reaction is 3-O-(beta-D-galactosyl-(1-&gt;4)-beta-D-xylosyl)-L-seryl-[protein] + UDP-alpha-D-galactose = 3-O-(beta-D-galactosyl-(1-&gt;3)-beta-D-galactosyl-(1-&gt;4)-beta-D-xylosyl)-L-seryl-[protein] + UDP + H(+). It participates in glycan metabolism; chondroitin sulfate biosynthesis. Its pathway is glycan metabolism; heparan sulfate biosynthesis. In terms of biological role, beta-1,3-galactosyltransferase that transfers galactose from UDP-galactose to substrates with a terminal beta-linked galactose residue. Has a preference for galactose-beta-1,4-xylose that is found in the linker region of glycosaminoglycans, such as heparan sulfate and chondroitin sulfate. Has no activity towards substrates with terminal glucosamine or galactosamine residues. The sequence is that of Beta-1,3-galactosyltransferase 6 (B3GALT6) from Homo sapiens (Human).